Reading from the N-terminus, the 171-residue chain is S-ribosylhomocysteine lyase (171 aa).

3 residues coordinate Fe cation: H54, H58, and C128.

This sequence belongs to the LuxS family. In terms of assembly, homodimer. Requires Fe cation as cofactor.

It carries out the reaction S-(5-deoxy-D-ribos-5-yl)-L-homocysteine = (S)-4,5-dihydroxypentane-2,3-dione + L-homocysteine. Functionally, involved in the synthesis of autoinducer 2 (AI-2) which is secreted by bacteria and is used to communicate both the cell density and the metabolic potential of the environment. The regulation of gene expression in response to changes in cell density is called quorum sensing. Catalyzes the transformation of S-ribosylhomocysteine (RHC) to homocysteine (HC) and 4,5-dihydroxy-2,3-pentadione (DPD). The protein is S-ribosylhomocysteine lyase of Escherichia coli O81 (strain ED1a).